A 283-amino-acid polypeptide reads, in one-letter code: Phosphatidylglycerol--prolipoprotein diacylglyceryl transferase (283 aa).

The next 4 membrane-spanning stretches (helical) occupy residues 17 to 37 (LAVR…TFLG), 56 to 76 (FLTW…VLFY), 92 to 112 (WEGG…IWLF), and 117 to 137 (GIGF…GLAS). Position 139 (arginine 139) interacts with a 1,2-diacyl-sn-glycero-3-phospho-(1'-sn-glycerol). The next 3 helical transmembrane spans lie at 194-214 (PSQL…VWLF), 222-242 (GQVA…AEFA), and 255-275 (GLSM…VGFV).

The protein belongs to the Lgt family.

The protein resides in the cell inner membrane. The catalysed reaction is L-cysteinyl-[prolipoprotein] + a 1,2-diacyl-sn-glycero-3-phospho-(1'-sn-glycerol) = an S-1,2-diacyl-sn-glyceryl-L-cysteinyl-[prolipoprotein] + sn-glycerol 1-phosphate + H(+). Its pathway is protein modification; lipoprotein biosynthesis (diacylglyceryl transfer). Catalyzes the transfer of the diacylglyceryl group from phosphatidylglycerol to the sulfhydryl group of the N-terminal cysteine of a prolipoprotein, the first step in the formation of mature lipoproteins. This Neisseria meningitidis serogroup C / serotype 2a (strain ATCC 700532 / DSM 15464 / FAM18) protein is Phosphatidylglycerol--prolipoprotein diacylglyceryl transferase.